Here is a 445-residue protein sequence, read N- to C-terminus: UPF0210 protein Sez_0396 (445 aa).

The protein belongs to the UPF0210 family. As to quaternary structure, homodimer.

The sequence is that of UPF0210 protein Sez_0396 from Streptococcus equi subsp. zooepidemicus (strain MGCS10565).